The following is a 613-amino-acid chain: Protein starmaker (613 aa).

Residues 1–20 (MLSRTVFVPLILAFVGVSIS) form the signal peptide. Residues 42–613 (FTVQFNVGTP…DGRKTSMPIS (572 aa)) form a disordered region. 5 stretches are compositionally biased toward basic and acidic residues: residues 62–72 (DGKDSAEKNEA), 117–132 (SAEK…DKPD), 147–193 (DASH…KPEG), 206–284 (SAEK…KSDD), and 291–449 (DEQK…HSDS). Over residues 450–465 (DSDSDSDSDSDSDSDS) the composition is skewed to acidic residues. 3 stretches are compositionally biased toward basic and acidic residues: residues 467-482 (SNSR…SSES), 509-521 (DKDS…KTDS), and 538-554 (DDSK…TAEK). The span at 555–573 (TDEDSHDVSDDDDDIDAHD) shows a compositional bias: acidic residues. The span at 574–607 (DEAGVEHGTDEASKPHQEPDHHDDTTHGSDDGRK) shows a compositional bias: basic and acidic residues.

It localises to the secreted. Its function is as follows. Essential for the formation of otoliths in the inner ear of developing larvae and for the perception of gravity and acceleration. May be one of the organic components of the ortholiths. The sequence is that of Protein starmaker (stm) from Danio rerio (Zebrafish).